Consider the following 635-residue polypeptide: Threonine--tRNA ligase (635 aa).

Positions 1-61 (MTVVRLPDGT…EIDSDLVLIT (61 aa)) constitute a TGS domain. Residues 242–533 (DHRKLGKQLD…LIEHHAGALP (292 aa)) are catalytic. Zn(2+)-binding residues include C333, H384, and H510.

Belongs to the class-II aminoacyl-tRNA synthetase family. In terms of assembly, homodimer. Requires Zn(2+) as cofactor.

The protein resides in the cytoplasm. It catalyses the reaction tRNA(Thr) + L-threonine + ATP = L-threonyl-tRNA(Thr) + AMP + diphosphate + H(+). Its function is as follows. Catalyzes the attachment of threonine to tRNA(Thr) in a two-step reaction: L-threonine is first activated by ATP to form Thr-AMP and then transferred to the acceptor end of tRNA(Thr). Also edits incorrectly charged L-seryl-tRNA(Thr). The sequence is that of Threonine--tRNA ligase from Nitrosomonas eutropha (strain DSM 101675 / C91 / Nm57).